We begin with the raw amino-acid sequence, 343 residues long: MFANVGFRTLRVSRGPLYGSCSQIISFSKRTFYSSAKSGYQSNNSHGDAYSSGSQSGPFTYKTAVAFQPKDRDDLIYQKLKDSIRSPTGEDNYFVTSNNVHDIFAGVADGVGGWAEHGYDSSAISRELCKKMDEISTALAENSSKETLLTPKKIIGAAYAKIRDEKVVKVGGTTAIVAHFPSNGKLEVANLGDSWCGVFRDSKLVFQTKFQTVGFNAPYQLSIIPEEMLKEAERRGSKYILNTPRDADEYSFQLKKKDIIILATDGVTDNIATDDIELFLKDNAARTNDELQLLSQKFVDNVVSLSKDPNYPSVFAQEISKLTGKNYSGGKEDDITVVVVRVD.

A mitochondrion-targeting transit peptide spans 1–39 (MFANVGFRTLRVSRGPLYGSCSQIISFSKRTFYSSAKSG). Residues 76-342 (IYQKLKDSIR…DDITVVVVRV (267 aa)) form the PPM-type phosphatase domain. Residues Asp-109, Gly-110, and Asp-265 each contribute to the Mn(2+) site.

The cofactor is Mg(2+). It depends on Mn(2+) as a cofactor.

The protein localises to the mitochondrion. It carries out the reaction O-phospho-L-seryl-[protein] + H2O = L-seryl-[protein] + phosphate. It catalyses the reaction O-phospho-L-threonyl-[protein] + H2O = L-threonyl-[protein] + phosphate. Functionally, protein phosphatase which positively regulates biosynthesis of the ubiquinone, coenzyme Q. Dephosphorylates and activates the ubiquinone biosynthesis protein CAT5/COQ7. Also dephosphorylates CIT1 on 'Ser-462', which leads to its activation. The protein is Protein phosphatase 2C homolog 7, mitochondrial (PTC7) of Saccharomyces cerevisiae (strain ATCC 204508 / S288c) (Baker's yeast).